Reading from the N-terminus, the 102-residue chain is Small ribosomal subunit protein uS10 (102 aa).

The protein belongs to the universal ribosomal protein uS10 family. In terms of assembly, part of the 30S ribosomal subunit.

Its function is as follows. Involved in the binding of tRNA to the ribosomes. The chain is Small ribosomal subunit protein uS10 from Streptococcus suis (strain 98HAH33).